Reading from the N-terminus, the 234-residue chain is Leucyl/phenylalanyl-tRNA--protein transferase (234 aa).

It belongs to the L/F-transferase family.

Its subcellular location is the cytoplasm. The catalysed reaction is N-terminal L-lysyl-[protein] + L-leucyl-tRNA(Leu) = N-terminal L-leucyl-L-lysyl-[protein] + tRNA(Leu) + H(+). It carries out the reaction N-terminal L-arginyl-[protein] + L-leucyl-tRNA(Leu) = N-terminal L-leucyl-L-arginyl-[protein] + tRNA(Leu) + H(+). The enzyme catalyses L-phenylalanyl-tRNA(Phe) + an N-terminal L-alpha-aminoacyl-[protein] = an N-terminal L-phenylalanyl-L-alpha-aminoacyl-[protein] + tRNA(Phe). Functionally, functions in the N-end rule pathway of protein degradation where it conjugates Leu, Phe and, less efficiently, Met from aminoacyl-tRNAs to the N-termini of proteins containing an N-terminal arginine or lysine. The sequence is that of Leucyl/phenylalanyl-tRNA--protein transferase from Escherichia fergusonii (strain ATCC 35469 / DSM 13698 / CCUG 18766 / IAM 14443 / JCM 21226 / LMG 7866 / NBRC 102419 / NCTC 12128 / CDC 0568-73).